The following is a 142-amino-acid chain: Large ribosomal subunit protein uL11 (142 aa).

Belongs to the universal ribosomal protein uL11 family. In terms of assembly, part of the ribosomal stalk of the 50S ribosomal subunit. Interacts with L10 and the large rRNA to form the base of the stalk. L10 forms an elongated spine to which L12 dimers bind in a sequential fashion forming a multimeric L10(L12)X complex. In terms of processing, one or more lysine residues are methylated.

In terms of biological role, forms part of the ribosomal stalk which helps the ribosome interact with GTP-bound translation factors. This is Large ribosomal subunit protein uL11 from Pelotomaculum thermopropionicum (strain DSM 13744 / JCM 10971 / SI).